The primary structure comprises 85 residues: U4-theraphotoxin-Hhn1t (85 aa).

The first 22 residues, 1–22 (MKVTLIAILTCAAVLVLHTTAA), serve as a signal peptide directing secretion. Positions 23-48 (EELEAESQLMEVGMPDTELAAVDEER) are excised as a propeptide. Cystine bridges form between cysteine 52–cysteine 66, cysteine 56–cysteine 77, and cysteine 71–cysteine 82.

It belongs to the neurotoxin 12 (Hwtx-2) family. 02 (Hwtx-2) subfamily. As to expression, expressed by the venom gland.

It is found in the secreted. Its function is as follows. Postsynaptic neurotoxin. In Cyriopagopus hainanus (Chinese bird spider), this protein is U4-theraphotoxin-Hhn1t.